A 674-amino-acid polypeptide reads, in one-letter code: Membrane-anchored lipid-binding protein LAM5 (674 aa).

2 disordered regions span residues 1–52 and 65–151; these read MSDV…LNTE and NQSA…GSPL. Over 1 to 633 the chain is Cytoplasmic; that stretch reads MSDVDNWEPV…AEQQGLKVTM (633 aa). A compositionally biased stretch (basic and acidic residues) spans 69–81; the sequence is ADEHPTEIKHDQS. Low complexity predominate over residues 82–119; sequence RTSSTSSFFSGMISSFKSNVPSPVSRSTTPTSPVSQPS. Threonine 110 is modified (phosphothreonine). Phosphoserine occurs at positions 113 and 140. The residue at position 143 (threonine 143) is a Phosphothreonine. A Phosphoserine modification is found at serine 149. Residues 198–264 form the GRAM domain; sequence KDFHETFKSV…FEDVTFMEKT (67 aa). Positions 336 to 357 are enriched in acidic residues; it reads IDEENNDKDANDNDTNENDDEN. The interval 336 to 380 is disordered; it reads IDEENNDKDANDNDTNENDDENISTNETTPNSTSSSPDKEKEKAY. The span at 358–371 shows a compositional bias: low complexity; the sequence is ISTNETTPNSTSSS. The 174-residue stretch at 409-582 folds into the VASt domain; the sequence is NEFVLKELPF…ILSKFIKNNV (174 aa). The helical transmembrane segment at 634-654 threads the bilayer; it reads ETWLFLYLIVVVLLLFNLFYI. Residues 655–674 are Lumenal-facing; that stretch reads RSIAVSLHQLVKLQLVELKL.

It belongs to the YSP2 family.

It is found in the endoplasmic reticulum membrane. In terms of biological role, may be involved in sterol transfer between intracellular membranes. The polypeptide is Membrane-anchored lipid-binding protein LAM5 (Saccharomyces cerevisiae (strain ATCC 204508 / S288c) (Baker's yeast)).